We begin with the raw amino-acid sequence, 88 residues long: Centromere protein W (88 aa).

The protein belongs to the CENP-W/WIP1 family. As to quaternary structure, heterodimer with CENPT; this dimer coassembles with CENPS-CENPX heterodimers at centromeres to form the tetrameric CENP-T-W-S-X complex, which is a subcomplex of the large constitutive centromere-associated network (CCAN, also known as the interphase centromere complex or ICEN). Interacts with NPM1. In terms of tissue distribution, highly expressed in ovary, liver, lung and pancreas and to a lower extent in breast and gastrointestinal tract cancers; such as those of the colon, rectum and stomach. Overexpressed in high grade breast invasive tumors. Expressed in many cancer cell types.

The protein resides in the nucleus. Its subcellular location is the chromosome. It is found in the centromere. It localises to the kinetochore. The protein localises to the nucleus matrix. The protein resides in the nucleolus. Functionally, component of the CENPA-NAC (nucleosome-associated) complex, a complex that plays a central role in assembly of kinetochore proteins, mitotic progression and chromosome segregation. The CENPA-NAC complex recruits the CENPA-CAD (nucleosome distal) complex and may be involved in incorporation of newly synthesized CENPA into centromeres. Part of a nucleosome-associated complex that binds specifically to histone H3-containing nucleosomes at the centromere, as opposed to nucleosomes containing CENPA. Component of the heterotetrameric CENP-T-W-S-X complex that binds and supercoils DNA, and plays an important role in kinetochore assembly. CENPW has a fundamental role in kinetochore assembly and function. It is one of the inner kinetochore proteins, with most further proteins binding downstream. Required for normal chromosome organization and normal progress through mitosis. The sequence is that of Centromere protein W (CENPW) from Homo sapiens (Human).